A 119-amino-acid polypeptide reads, in one-letter code: Large ribosomal subunit protein bL20 (119 aa).

Belongs to the bacterial ribosomal protein bL20 family.

Functionally, binds directly to 23S ribosomal RNA and is necessary for the in vitro assembly process of the 50S ribosomal subunit. It is not involved in the protein synthesizing functions of that subunit. The chain is Large ribosomal subunit protein bL20 (rplT) from Geobacillus stearothermophilus (Bacillus stearothermophilus).